The primary structure comprises 359 residues: Mannonate dehydratase (359 aa).

The protein belongs to the mannonate dehydratase family. It depends on Fe(2+) as a cofactor. The cofactor is Mn(2+).

The catalysed reaction is D-mannonate = 2-dehydro-3-deoxy-D-gluconate + H2O. It participates in carbohydrate metabolism; pentose and glucuronate interconversion. Functionally, catalyzes the dehydration of D-mannonate. This chain is Mannonate dehydratase (uxuA), found in Bacillus subtilis (strain 168).